Here is a 229-residue protein sequence, read N- to C-terminus: MPKKKALTPFPYLASIVFLPWWISLSFTKSLEPWVTNWWNTGQSKTFLNDIQEKNVLERFIELEQLFLLDEMIKEYPETQIQKFHIGIHKETLQLVKMHNEDHIHIVLHFSTNIICFAILSGYYFLGNEELVILNSWVQEFLYNLSDTIKAFSILLVTDLCIGFHSPRGWELMIGSVYKDFGFAHNDQIISGLVSTFPVILDTILKYWIFHYLNRVSPSLVVIYHSMNE.

The next 3 membrane-spanning stretches (helical) occupy residues 7 to 27, 106 to 126, and 189 to 209; these read LTPF…SLSF, IVLH…YYFL, and IISG…KYWI.

Belongs to the CemA family.

It is found in the plastid. Its subcellular location is the chloroplast inner membrane. It catalyses the reaction K(+)(in) + H(+)(out) = K(+)(out) + H(+)(in). Functionally, contributes to K(+)/H(+) antiport activity by supporting proton efflux to control proton extrusion and homeostasis in chloroplasts in a light-dependent manner to modulate photosynthesis. Prevents excessive induction of non-photochemical quenching (NPQ) under continuous-light conditions. Indirectly promotes efficient inorganic carbon uptake into chloroplasts. In Calycanthus floridus var. glaucus (Eastern sweetshrub), this protein is Potassium/proton antiporter CemA.